The chain runs to 339 residues: Ketol-acid reductoisomerase (NADP(+)) (339 aa).

The region spanning 1–182 (MRVYYDRDAD…GGGRAGIIET (182 aa)) is the KARI N-terminal Rossmann domain. Residues 24-27 (YGSQ), Arg-48, Ser-51, and 83-86 (DEGQ) contribute to the NADP(+) site. His-108 is a catalytic residue. Gly-134 contributes to the NADP(+) binding site. In terms of domain architecture, KARI C-terminal knotted spans 183–328 (TFKEEVETDL…EKLRAMMPWI (146 aa)). Asp-191, Glu-195, Glu-227, and Glu-231 together coordinate Mg(2+). Ser-252 contacts substrate.

Belongs to the ketol-acid reductoisomerase family. It depends on Mg(2+) as a cofactor.

The catalysed reaction is (2R)-2,3-dihydroxy-3-methylbutanoate + NADP(+) = (2S)-2-acetolactate + NADPH + H(+). It catalyses the reaction (2R,3R)-2,3-dihydroxy-3-methylpentanoate + NADP(+) = (S)-2-ethyl-2-hydroxy-3-oxobutanoate + NADPH + H(+). It functions in the pathway amino-acid biosynthesis; L-isoleucine biosynthesis; L-isoleucine from 2-oxobutanoate: step 2/4. It participates in amino-acid biosynthesis; L-valine biosynthesis; L-valine from pyruvate: step 2/4. Involved in the biosynthesis of branched-chain amino acids (BCAA). Catalyzes an alkyl-migration followed by a ketol-acid reduction of (S)-2-acetolactate (S2AL) to yield (R)-2,3-dihydroxy-isovalerate. In the isomerase reaction, S2AL is rearranged via a Mg-dependent methyl migration to produce 3-hydroxy-3-methyl-2-ketobutyrate (HMKB). In the reductase reaction, this 2-ketoacid undergoes a metal-dependent reduction by NADPH to yield (R)-2,3-dihydroxy-isovalerate. This Gluconobacter oxydans (strain 621H) (Gluconobacter suboxydans) protein is Ketol-acid reductoisomerase (NADP(+)).